A 396-amino-acid chain; its full sequence is Subtilisin-like protease 5 (396 aa).

Residues 1-20 form the signal peptide; sequence MTGFFTILSFSLAALSVTNA. Positions 21–116 are excised as a propeptide; that stretch reads AQILSVPKGA…VEPDAIISQH (96 aa). An Inhibitor I9 domain is found at 37-113; sequence YIVVMKDDTS…VAFVEPDAII (77 aa). The Peptidase S8 domain maps to 125–396; sequence PWGLSRLSNR…SRLLYNGSGR (272 aa). Residues aspartate 156 and histidine 187 each act as charge relay system in the active site. N-linked (GlcNAc...) asparagine glycans are attached at residues asparagine 230 and asparagine 248. Serine 342 acts as the Charge relay system in catalysis. Over residues 376 to 389 the composition is skewed to polar residues; sequence PTIRNPGPDTTSRL. Residues 376–396 form a disordered region; sequence PTIRNPGPDTTSRLLYNGSGR. N-linked (GlcNAc...) asparagine glycosylation is present at asparagine 392.

Belongs to the peptidase S8 family.

The protein resides in the secreted. Functionally, secreted subtilisin-like serine protease with keratinolytic activity that contributes to pathogenicity. In Arthroderma benhamiae (strain ATCC MYA-4681 / CBS 112371) (Trichophyton mentagrophytes), this protein is Subtilisin-like protease 5 (SUB5).